A 450-amino-acid polypeptide reads, in one-letter code: Tubulin beta chain (450 aa).

Glu69, Ser138, Gly142, Thr143, Gly144, Asn204, and Asn226 together coordinate GTP. A Mg(2+)-binding site is contributed by Glu69. The disordered stretch occupies residues 427–450; it reads DATIDQEFEDEEEVEEQNDDSDEQ. The segment covering 430–450 has biased composition (acidic residues); sequence IDQEFEDEEEVEEQNDDSDEQ.

This sequence belongs to the tubulin family. As to quaternary structure, dimer of alpha and beta chains. A typical microtubule is a hollow water-filled tube with an outer diameter of 25 nm and an inner diameter of 15 nM. Alpha-beta heterodimers associate head-to-tail to form protofilaments running lengthwise along the microtubule wall with the beta-tubulin subunit facing the microtubule plus end conferring a structural polarity. Microtubules usually have 13 protofilaments but different protofilament numbers can be found in some organisms and specialized cells. Requires Mg(2+) as cofactor.

It localises to the cytoplasm. The protein resides in the cytoskeleton. In terms of biological role, tubulin is the major constituent of microtubules, a cylinder consisting of laterally associated linear protofilaments composed of alpha- and beta-tubulin heterodimers. Microtubules grow by the addition of GTP-tubulin dimers to the microtubule end, where a stabilizing cap forms. Below the cap, tubulin dimers are in GDP-bound state, owing to GTPase activity of alpha-tubulin. The polypeptide is Tubulin beta chain (Bombyx mori (Silk moth)).